Here is a 94-residue protein sequence, read N- to C-terminus: Small ribosomal subunit protein bS18 (94 aa).

It belongs to the bacterial ribosomal protein bS18 family. In terms of assembly, part of the 30S ribosomal subunit. Forms a tight heterodimer with protein bS6.

Binds as a heterodimer with protein bS6 to the central domain of the 16S rRNA, where it helps stabilize the platform of the 30S subunit. This Polaromonas sp. (strain JS666 / ATCC BAA-500) protein is Small ribosomal subunit protein bS18.